Consider the following 374-residue polypeptide: Arf-GAP with dual PH domain-containing protein 1 (374 aa).

The Arf-GAP domain maps to 7–126; the sequence is RAVLELLQRP…EFIYPEKQEP (120 aa). The C4-type zinc finger occupies 21–44; it reads CADCGAPDPDWASYTLGVFICLSC. Serine 87 is subject to Phosphoserine; by PKC. PH domains lie at 129–230 and 252–356; these read AGYR…AARF and NYLK…KAVD. Residue lysine 272 is modified to N6-acetyllysine. Threonine 276 bears the Phosphothreonine; by PKC mark.

Interacts with PRKCA, PRKCI and PRKCZ. Interacts with the N-terminal region of PRKD1. Phosphorylated by PRKCA, PRKCI, PRKCZ and PRKD1 in vitro. As to expression, expressed at highest levels in brain and at lower levels in peripheral blood leukocytes.

It is found in the nucleus. The protein localises to the cytoplasm. Its function is as follows. GTPase-activating protein for the ADP ribosylation factor family. Binds phosphatidylinositol 3,4,5-trisphosphate (PtdInsP3) and inositol 1,3,4,5-tetrakisphosphate (InsP4). Regulates the incorporation of CD63 and CD9 into multivesicular bodies. The sequence is that of Arf-GAP with dual PH domain-containing protein 1 (ADAP1) from Homo sapiens (Human).